The following is a 325-amino-acid chain: Probable flavonol synthase 5 (325 aa).

The disordered stretch occupies residues 1 to 21; sequence MEEERDHNASESSLPSLSKQL. The span at 10–21 shows a compositional bias: polar residues; sequence SESSLPSLSKQL. The Fe2OG dioxygenase domain maps to 180-280; sequence TAEYVLRVNF…RISWPVFVAP (101 aa). 188–190 is a binding site for 2-oxoglutarate; sequence NFY. Fe cation is bound by residues H205, D207, and H261. Position 271 to 273 (271 to 273) interacts with 2-oxoglutarate; sequence RIS.

The protein belongs to the iron/ascorbate-dependent oxidoreductase family. The cofactor is Fe(2+). In terms of tissue distribution, expressed in young seedlings.

The enzyme catalyses a (2R,3R)-dihydroflavonol + 2-oxoglutarate + O2 = a flavonol + succinate + CO2 + H2O. Its pathway is secondary metabolite biosynthesis; flavonoid biosynthesis. The sequence is that of Probable flavonol synthase 5 (FLS5) from Arabidopsis thaliana (Mouse-ear cress).